The primary structure comprises 100 residues: Urease subunit gamma (100 aa).

It belongs to the urease gamma subunit family. As to quaternary structure, heterotrimer of UreA (gamma), UreB (beta) and UreC (alpha) subunits. Three heterotrimers associate to form the active enzyme.

It localises to the cytoplasm. It catalyses the reaction urea + 2 H2O + H(+) = hydrogencarbonate + 2 NH4(+). It participates in nitrogen metabolism; urea degradation; CO(2) and NH(3) from urea (urease route): step 1/1. This Leptothrix cholodnii (strain ATCC 51168 / LMG 8142 / SP-6) (Leptothrix discophora (strain SP-6)) protein is Urease subunit gamma.